Here is a 590-residue protein sequence, read N- to C-terminus: MDLMNGQASSVTIAATVSEKSSSSESLSEKGSELKKSFDAVVFDVLKVTPEEYAGQITLMDVPVFKAIQPDELSSCGWNKKEKYSSAPNAVAFTRRFNHVSFWVVREILHAQTLKIRAEVLSHYIKTAKKLYELNNLHALMAVVSGLQSAPIFRLTKTWALLSRKDKTTFEKLEYVMSKEDNYKRLRDYISSLKMTPCIPYLGIYLSDLTYIDSAYPSTGSILENEQRSNLMNNILRIISDLQQSCEYDIPILPHVQKYLNSVQYIEELQKFVEDDNYKLSLKIEPGASTPRSAASREDLAGPDIGASPQGGRKSSAAAAAAAAAEGALLPQTPPSPRNLIPHGHRKCHSLGYNFIHKMNTAEFKSATFPNAGPRHLLDDSVMEPHAPSRGQAESSTLSSGISIGSSDGSELSEETSWPAFERNRLYHSLGPVTRVPRNGYRSHTKASSSAESEDLAVHLYPGAVTIQGVLRRKTLLKEGKKPTVASWTKYWAALCGTQLFYYAAKSLKATERKHFKSTSNKNVSVVGWMVMMADDPEHPDLFLLTDSEKGNSYKFQAGSRMNAMLWFKHLSAACQSNKQQVPTNLMTFE.

The region spanning 49–287 (TPEEYAGQIT…YKLSLKIEPG (239 aa)) is the Ras-GEF domain. A disordered region spans residues 288–319 (ASTPRSAASREDLAGPDIGASPQGGRKSSAAA). Serine 293, serine 296, and serine 308 each carry phosphoserine. Residues 331-334 (PQTP) carry the PXXP motif. Threonine 333 is modified (phosphothreonine). 2 positions are modified to phosphoserine: serine 336 and serine 350. Threonine 368 bears the Phosphothreonine mark. Positions 380–413 (DSVMEPHAPSRGQAESSTLSSGISIGSSDGSELS) are disordered. Serine 381 carries the phosphoserine modification. The span at 394–410 (ESSTLSSGISIGSSDGS) shows a compositional bias: low complexity. Serine 429 carries the post-translational modification Phosphoserine. Residues 464–576 (AVTIQGVLRR…WFKHLSAACQ (113 aa)) enclose the PH domain. Positions 466–590 (TIQGVLRRKT…QVPTNLMTFE (125 aa)) are required for stimulation of nucleotide exchange by RALA.

In terms of assembly, interacts with RALA. Interacts with the SH3 domains of GRB2 and PLCG1. In terms of tissue distribution, abundant in brain and testis.

It is found in the cytoplasm. The protein localises to the cell membrane. In terms of biological role, guanine nucleotide exchange factor for the small GTPase RALA. May be involved in cytoskeletal organization. May also be involved in the stimulation of transcription in a Ras-independent fashion. The protein is Ras-specific guanine nucleotide-releasing factor RalGPS2 (Ralgps2) of Mus musculus (Mouse).